Consider the following 198-residue polypeptide: Phosphoheptose isomerase (198 aa).

The 159-residue stretch at 40-198 folds into the SIS domain; it reads IVTALRSGRK…IEAALMQDLS (159 aa). 55–57 provides a ligand contact to substrate; the sequence is NGG. H64 and E68 together coordinate Zn(2+). Substrate is bound by residues E68, 97–98, 123–125, S128, and Q175; these read ND and STS. Residues Q175 and H183 each contribute to the Zn(2+) site.

The protein belongs to the SIS family. GmhA subfamily. Homotetramer. It depends on Zn(2+) as a cofactor.

The protein resides in the cytoplasm. The catalysed reaction is 2 D-sedoheptulose 7-phosphate = D-glycero-alpha-D-manno-heptose 7-phosphate + D-glycero-beta-D-manno-heptose 7-phosphate. It functions in the pathway carbohydrate biosynthesis; D-glycero-D-manno-heptose 7-phosphate biosynthesis; D-glycero-alpha-D-manno-heptose 7-phosphate and D-glycero-beta-D-manno-heptose 7-phosphate from sedoheptulose 7-phosphate: step 1/1. Its function is as follows. Catalyzes the isomerization of sedoheptulose 7-phosphate in D-glycero-D-manno-heptose 7-phosphate. The sequence is that of Phosphoheptose isomerase from Bradyrhizobium sp. (strain BTAi1 / ATCC BAA-1182).